The sequence spans 507 residues: MEEFQGYLELYRSWQDNFLYPLILQESIYALVHNQDLGLNGSILLSKKKGYDTKYSLLVVKRLVIRMYQQNFVILSLNDSNKNEFFVPNKNLYSQRISEGFAVLAEIPFSMRVMSSLKGKERKQYQNLRSIHSIFPFLEDKFSRLNHVLDILIPHPVHTKILVQTIRYCVKDISCLHLLQLLLYEYCNNGITLKGSVSNLSKNKNQRFLLFLYNSYVCECESIFVFLRNQSSHLRSTSYGAFLARVYFYLKLEHFLKVFTKHFRVILQFFKDPFMHYVRYQGKWILASRGTFLLMTKLKYYFVNFWQCNFYLWLQTRRIYINKSLNQPIDFIGFLLSVRLNPSVVRSQMLENSFLIYNGIKKFETLVPTMSLIGSLAKAKFCNVLGHPISKPAWADLSDSDIIRRFGRMCRNLSHYYSGSSKKGGLYRIKYILRLSCARTLARKHKSTVRAFMKRLGSEFFEEFFFKEEKVISLILSRDSSISRRLYRGPIWYFDIFCIHDLASHND.

It belongs to the intron maturase 2 family. MatK subfamily.

It localises to the plastid. It is found in the chloroplast. Its function is as follows. Usually encoded in the trnK tRNA gene intron. Probably assists in splicing its own and other chloroplast group II introns. This Fagopyrum tataricum (Tartarian buckwheat) protein is Maturase K.